Here is a 223-residue protein sequence, read N- to C-terminus: Uracil-DNA glycosylase (223 aa).

The Proton acceptor role is filled by Asp61.

Belongs to the uracil-DNA glycosylase (UDG) superfamily. UNG family.

It localises to the cytoplasm. The catalysed reaction is Hydrolyzes single-stranded DNA or mismatched double-stranded DNA and polynucleotides, releasing free uracil.. Its function is as follows. Excises uracil residues from the DNA which can arise as a result of misincorporation of dUMP residues by DNA polymerase or due to deamination of cytosine. This Haemophilus ducreyi (strain 35000HP / ATCC 700724) protein is Uracil-DNA glycosylase.